Reading from the N-terminus, the 32-residue chain is U13-ctenitoxin-Pn1a (32 aa).

Disulfide bonds link Cys3/Cys17, Cys10/Cys21, and Cys16/Cys30.

In terms of tissue distribution, expressed by the venom gland.

Its subcellular location is the secreted. Functionally, acts as a neurotoxin. In Phoneutria nigriventer (Brazilian armed spider), this protein is U13-ctenitoxin-Pn1a.